The following is a 669-amino-acid chain: Coagulation factor XIII B chain (669 aa).

The first 21 residues, 1 to 21 (MMTLRHLPFILLLILSGELYA), serve as a signal peptide directing secretion. 10 Sushi domains span residues 25–89 (QCDF…PRCY), 90–149 (KKCL…SCRK), 152–211 (ETCL…QCNK), 212–270 (LMCS…ICEG), 273–330 (NRCP…KCIE), 335–392 (VACE…ECVE), 395–453 (ENCK…VCLE), 454–517 (PCTI…PMCI), 523–581 (GMCA…SCLE), and 582–648 (PCTL…PKCT). 20 disulfide bridges follow: C26/C77, C60/C88, C92/C136, C119/C147, C154/C198, C181/C209, C214/C256, C242/C268, C275/C317, C303/C328, C337/C379, C365/C390, C397/C440, C426/C451, C455/C506, C487/C516, C525/C568, C554/C579, C583/C637, and C617/C647. N-linked (GlcNAc...) asparagine glycosylation is present at N163. N546 carries N-linked (GlcNAc...) asparagine glycosylation.

Tetramer of two A chains (F13A1) and two B (F13B) chains. In terms of tissue distribution, predominantly expressed in liver and kidney.

It is found in the secreted. In terms of biological role, the B chain of factor XIII is not catalytically active, but is thought to stabilize the A subunits and regulate the rate of transglutaminase formation by thrombin. The sequence is that of Coagulation factor XIII B chain (F13b) from Mus musculus (Mouse).